The following is a 216-amino-acid chain: Guanylate kinase (216 aa).

One can recognise a Guanylate kinase-like domain in the interval G11–L189. An ATP-binding site is contributed by G18–G25.

This sequence belongs to the guanylate kinase family.

The protein resides in the cytoplasm. The catalysed reaction is GMP + ATP = GDP + ADP. Its function is as follows. Essential for recycling GMP and indirectly, cGMP. The protein is Guanylate kinase of Clostridium perfringens (strain ATCC 13124 / DSM 756 / JCM 1290 / NCIMB 6125 / NCTC 8237 / Type A).